A 259-amino-acid polypeptide reads, in one-letter code: tRNA (guanine-N(7)-)-methyltransferase (259 aa).

The interval 1-74 (MGHHGQMHAQ…PAEDPDRPGP (74 aa)) is disordered. Positions 91, 116, 143, and 166 each coordinate S-adenosyl-L-methionine. Asp166 is an active-site residue. Substrate-binding positions include Lys170, Asp202, and 238-241 (TKYE).

The protein belongs to the class I-like SAM-binding methyltransferase superfamily. TrmB family.

It catalyses the reaction guanosine(46) in tRNA + S-adenosyl-L-methionine = N(7)-methylguanosine(46) in tRNA + S-adenosyl-L-homocysteine. It functions in the pathway tRNA modification; N(7)-methylguanine-tRNA biosynthesis. In terms of biological role, catalyzes the formation of N(7)-methylguanine at position 46 (m7G46) in tRNA. The protein is tRNA (guanine-N(7)-)-methyltransferase of Mycobacterium avium (strain 104).